Reading from the N-terminus, the 406-residue chain is Phosphatidylinositol 5-phosphate 4-kinase type-2 alpha (406 aa).

A2 bears the N-acetylalanine mark. T3 is subject to Phosphothreonine. A Phosphoserine modification is found at S14. Residues 33–405 (ASDPLLSVLM…RFLDFIGHIL (373 aa)) form the PIPK domain. The segment at 59–65 (VMLMPDD) is required for interaction with PIP5K1A. An N6-acetyllysine mark is found at K89 and K145. The tract at residues 287 to 328 (EQEEVECEENEGEEEGESDGAHPIGTPPDSPGNTLNSSPPLA) is disordered. The span at 289-304 (EEVECEENEGEEEGES) shows a compositional bias: acidic residues.

As to quaternary structure, homodimer. Interacts with PIP4K2B; the interaction may regulate localization to the nucleus. Probably interacts with PIP5K1A; the interaction inhibits PIP5K1A kinase activity. Post-translationally, phosphorylated in tyrosines. Phosphorylation is induced by light and increases kinase activity.

Its subcellular location is the cell membrane. The protein resides in the nucleus. The protein localises to the lysosome. It localises to the cytoplasm. It is found in the photoreceptor inner segment. Its subcellular location is the cell projection. The protein resides in the cilium. The protein localises to the photoreceptor outer segment. It catalyses the reaction a 1,2-diacyl-sn-glycero-3-phospho-(1D-myo-inositol-5-phosphate) + ATP = a 1,2-diacyl-sn-glycero-3-phospho-(1D-myo-inositol-4,5-bisphosphate) + ADP + H(+). The enzyme catalyses 1,2-dihexadecanoyl-sn-glycero-3-phospho-(1D-myo-inositol-5-phosphate) + ATP = 1,2-dihexadecanoyl-sn-glycero-3-phospho-(1D-myo-inositol-4,5-bisphosphate) + ADP + H(+). It carries out the reaction 1,2-dihexadecanoyl-sn-glycero-3-phospho-(1D-myo-inositol-5-phosphate) + GTP = 1,2-dihexadecanoyl-sn-glycero-3-phospho-(1D-myo-inositol-4,5-bisphosphate) + GDP + H(+). In rod outer segments, activated by light. Catalyzes the phosphorylation of phosphatidylinositol 5-phosphate (PtdIns5P) on the fourth hydroxyl of the myo-inositol ring, to form phosphatidylinositol 4,5-bisphosphate (PtdIns(4,5)P2). Has both ATP- and GTP-dependent kinase activities. May exert its function by regulating the levels of PtdIns5P, which functions in the cytosol by increasing AKT activity and in the nucleus signals through ING2. May regulate the pool of cytosolic PtdIns5P in response to the activation of tyrosine phosphorylation. Required for lysosome-peroxisome membrane contacts and intracellular cholesterol transport through modulating peroxisomal PtdIns(4,5)P2 level. In collaboration with PIP4K2B, has a role in mediating autophagy in times of nutrient stress. Required for autophagosome-lysosome fusion and the regulation of cellular lipid metabolism. Negatively regulates insulin signaling through a catalytic-independent mechanism. PIP4Ks interact with PIP5Ks and suppress PIP5K-mediated PtdIns(4,5)P2 synthesis and insulin-dependent conversion to PtdIns(3,4,5)P3. May be involved in thrombopoiesis, and the terminal maturation of megakaryocytes and regulation of their size. This Rattus norvegicus (Rat) protein is Phosphatidylinositol 5-phosphate 4-kinase type-2 alpha.